A 72-amino-acid polypeptide reads, in one-letter code: MATKDTGGGQQKATRSTEEVEEQAQDAQASEDLKERQEKLSDDVDSVLDEIDDVLEENAEDFVRSFVQKGGE.

Residues 1-10 (MATKDTGGGQ) are compositionally biased toward gly residues. Residues 1–45 (MATKDTGGGQQKATRSTEEVEEQAQDAQASEDLKERQEKLSDDVD) are disordered. Residues 10-60 (QQKATRSTEEVEEQAQDAQASEDLKERQEKLSDDVDSVLDEIDDVLEENAE) are a coiled coil. The ARC ATPase binding stretch occupies residues 28-66 (QASEDLKERQEKLSDDVDSVLDEIDDVLEENAEDFVRSF). Over residues 31-42 (EDLKERQEKLSD) the composition is skewed to basic and acidic residues. An Isoglutamyl lysine isopeptide (Glu-Lys) (interchain with K-? in acceptor proteins) cross-link involves residue Glu-72.

This sequence belongs to the prokaryotic ubiquitin-like protein family. Strongly interacts with the proteasome-associated ATPase ARC through a hydrophobic interface; the interacting region of Pup lies in its C-terminal half. There is one Pup binding site per ARC hexamer ring.

It functions in the pathway protein degradation; proteasomal Pup-dependent pathway. Functionally, protein modifier that is covalently attached to lysine residues of substrate proteins, thereby targeting them for proteasomal degradation. The tagging system is termed pupylation. The polypeptide is Prokaryotic ubiquitin-like protein Pup (Streptomyces coelicolor (strain ATCC BAA-471 / A3(2) / M145)).